A 277-amino-acid chain; its full sequence is NH(3)-dependent NAD(+) synthetase (277 aa).

Residue 47–54 coordinates ATP; the sequence is GISGGQDS. D53 serves as a coordination point for Mg(2+). Residue R141 coordinates deamido-NAD(+). Residue T161 coordinates ATP. Position 166 (E166) interacts with Mg(2+). The deamido-NAD(+) site is built by K174 and D181. Positions 190 and 212 each coordinate ATP. Position 261–262 (261–262) interacts with deamido-NAD(+); sequence HK.

This sequence belongs to the NAD synthetase family. As to quaternary structure, homodimer.

The enzyme catalyses deamido-NAD(+) + NH4(+) + ATP = AMP + diphosphate + NAD(+) + H(+). It functions in the pathway cofactor biosynthesis; NAD(+) biosynthesis; NAD(+) from deamido-NAD(+) (ammonia route): step 1/1. In terms of biological role, catalyzes the ATP-dependent amidation of deamido-NAD to form NAD. Uses ammonia as a nitrogen source. This Lactobacillus johnsonii (strain CNCM I-12250 / La1 / NCC 533) protein is NH(3)-dependent NAD(+) synthetase.